Consider the following 427-residue polypeptide: Peptidase B (427 aa).

2 residues coordinate Mn(2+): Lys195 and Asp200. Lys207 is a catalytic residue. 3 residues coordinate Mn(2+): Asp218, Asp277, and Glu279. Arg281 is an active-site residue.

This sequence belongs to the peptidase M17 family. In terms of assembly, homohexamer. Mn(2+) serves as cofactor.

It localises to the cytoplasm. It carries out the reaction Release of an N-terminal amino acid, Xaa, from a peptide or arylamide. Xaa is preferably Glu or Asp but may be other amino acids, including Leu, Met, His, Cys and Gln.. In terms of biological role, probably plays an important role in intracellular peptide degradation. This chain is Peptidase B, found in Escherichia coli O157:H7.